We begin with the raw amino-acid sequence, 374 residues long: RNA polymerase sigma factor SigA (374 aa).

The segment at 141–211 (LAEANLRLVV…TRAIADQART (71 aa)) is sigma-70 factor domain-2. Residues 165–168 (DLIQ) carry the Interaction with polymerase core subunit RpoC motif. Positions 220-296 (ETINKLIRVQ…DQDATSPSDH (77 aa)) are sigma-70 factor domain-3. The segment at 309–362 (VLDTLTDREENVLRLRFGLDDGRTRTLEEVGRVFGVTRERIRQIEAKALRKLRH) is sigma-70 factor domain-4. Positions 335–354 (LEEVGRVFGVTRERIRQIEA) form a DNA-binding region, H-T-H motif.

It belongs to the sigma-70 factor family. RpoD/SigA subfamily. In terms of assembly, interacts transiently with the RNA polymerase catalytic core.

Its subcellular location is the cytoplasm. Sigma factors are initiation factors that promote the attachment of RNA polymerase to specific initiation sites and are then released. This sigma factor is the primary sigma factor during exponential growth. This is RNA polymerase sigma factor SigA from Listeria monocytogenes serovar 1/2a (strain ATCC BAA-679 / EGD-e).